A 442-amino-acid polypeptide reads, in one-letter code: tRNA modification GTPase MnmE (442 aa).

The (6S)-5-formyl-5,6,7,8-tetrahydrofolate site is built by Arg-27, Glu-84, and Lys-124. Residues 221-366 (GLHVVIVGAP…LLDALQAFAE (146 aa)) form the TrmE-type G domain. Residues 231–236 (NAGKSS), 250–256 (SEEAGTT), and 275–278 (DTAG) each bind GTP. Mg(2+) is bound by residues Ser-235 and Thr-256. Lys-442 contacts (6S)-5-formyl-5,6,7,8-tetrahydrofolate.

The protein belongs to the TRAFAC class TrmE-Era-EngA-EngB-Septin-like GTPase superfamily. TrmE GTPase family. Homodimer. Heterotetramer of two MnmE and two MnmG subunits. K(+) serves as cofactor.

It localises to the cytoplasm. In terms of biological role, exhibits a very high intrinsic GTPase hydrolysis rate. Involved in the addition of a carboxymethylaminomethyl (cmnm) group at the wobble position (U34) of certain tRNAs, forming tRNA-cmnm(5)s(2)U34. The polypeptide is tRNA modification GTPase MnmE (Brucella ovis (strain ATCC 25840 / 63/290 / NCTC 10512)).